A 116-amino-acid chain; its full sequence is Vitelline membrane protein Vm32E (116 aa).

The signal sequence occupies residues 1–17 (MQIVALTLVAFVAIAGA). One can recognise a VM domain in the interval 36–73 (GYPAPPCPTNYLFSCQPNLAPAPCAQEAPAYGSAGAYT).

Belongs to the vitelline membrane family. In terms of processing, sulfated by pip; may be involved in embryo dorsal-ventral axis determination. Sulfation by pip may occur on covalently bound glycosaminoglycans. In terms of tissue distribution, expressed in stage 10 egg-chambers, localized in the outer eggshell (chorion membrane).

It localises to the secreted. Major early eggshell protein. The protein is Vitelline membrane protein Vm32E of Drosophila melanogaster (Fruit fly).